A 555-amino-acid polypeptide reads, in one-letter code: Solute carrier family 22 member 2 (555 aa).

Residues 1-21 (MSTVDDILEHIGEFHLFQKQT) are Cytoplasmic-facing. A helical membrane pass occupies residues 22 to 42 (FFLLALLSGAFTPIYVGIVFL). At 43-150 (GFTPDHHCWS…LVCAHSWMLD (108 aa)) the chain is on the extracellular side. Asparagine 71 is a glycosylation site (N-linked (GlcNAc...) asparagine). Residues 151-171 (LFQSVVNVGFFIGAMMIGYLA) traverse the membrane as a helical segment. Residues 172-177 (DRFGRK) lie on the Cytoplasmic side of the membrane. Residues 178–198 (FCLLVTILINAISGALMAISP) form a helical membrane-spanning segment. Over 199–210 (NYAWMLVFRFLQ) the chain is Extracellular. A helical transmembrane segment spans residues 211 to 231 (GLVSKAGWLIGYILITEFVGL). Residues 232–238 (GYRRMVG) are Cytoplasmic-facing. Residues 239 to 259 (ICYQIAFTVGLLILAGVAYVI) form a helical membrane-spanning segment. Residues 260–263 (PNWR) are Extracellular-facing. Residues 264–284 (WLQFAVTLPNFCFLLYFWCIP) traverse the membrane as a helical segment. A Proline-rich sequence motif is present at residues 284-288 (PESPR). The Cytoplasmic segment spans residues 285 to 348 (ESPRWLISQN…VRTPQIRKHT (64 aa)). Residues 349–369 (LILMYNWFTSSVLYQGLIMHM) traverse the membrane as a helical segment. At 370–375 (GLAGDN) the chain is on the extracellular side. Residues 376-396 (IYLDFFYSALVEFPAAFIIIL) form a helical membrane-spanning segment. The Cytoplasmic segment spans residues 397–404 (TIDRVGRR). A helical transmembrane segment spans residues 405–425 (YPWAVSNMVAGAACLASVFIP). The Extracellular portion of the chain corresponds to 426 to 432 (DDLQWLK). Residues 433-453 (ITIACLGRMGITMAYEMVCLV) form a helical membrane-spanning segment. Residues 454-464 (NAELYPTYIRN) are Cytoplasmic-facing. A helical transmembrane segment spans residues 465–485 (LGVLVCSSMCDIGGIITPFLV). Residues 486–494 (YRLTDIWME) lie on the Extracellular side of the membrane. Residues 495–515 (FPLVVFAVVGLVAGALVLLLP) form a helical membrane-spanning segment. Topologically, residues 516–555 (ETKGKALPETIEDAENMQRPRKKKEKRIYLQVKQADRPLS) are cytoplasmic.

This sequence belongs to the major facilitator (TC 2.A.1) superfamily. Organic cation transporter (TC 2.A.1.19) family. Post-translationally, tyrosine phosphorylated. Expressed in the kidney, in the proximal tubules of cortex and of the outer medulla. In brain, highly expressed predominantly in regions located at the brain-cerebrospinal fluid border, in the leptomeninges, in the choroid plexus and in a layer boarding the third ventricle. In brain, also observed in the granular cell layer of the cerebellum and in the granular layer and pyramidal cells of the hippocampus in the CA1-CA3 regions. Expressed in tracheal and bronchial ciliated epithelium in the respiratory tract. Expression is greater in the kidney of male than of female.

Its subcellular location is the basolateral cell membrane. It is found in the basal cell membrane. The protein resides in the apical cell membrane. It carries out the reaction (R)-noradrenaline(out) = (R)-noradrenaline(in). It catalyses the reaction (R)-adrenaline(out) = (R)-adrenaline(in). The enzyme catalyses serotonin(out) = serotonin(in). The catalysed reaction is dopamine(out) = dopamine(in). It carries out the reaction histamine(out) = histamine(in). It catalyses the reaction thiamine(in) = thiamine(out). The enzyme catalyses creatinine(in) = creatinine(out). The catalysed reaction is 1-methylnicotinamide(out) = 1-methylnicotinamide(in). It carries out the reaction guanidine(out) = guanidine(in). It catalyses the reaction choline(out) = choline(in). The enzyme catalyses agmatine(out) = agmatine(in). The catalysed reaction is putrescine(out) = putrescine(in). It carries out the reaction spermidine(in) = spermidine(out). It catalyses the reaction tyramine(in) = tyramine(out). The enzyme catalyses L-histidyl-L-proline diketopiperazine(in) = L-histidyl-L-proline diketopiperazine(out). The catalysed reaction is (R)-salsolinol(in) = (R)-salsolinol(out). It carries out the reaction N-methyl-(R)-salsolinol(in) = N-methyl-(R)-salsolinol(out). It catalyses the reaction acetylcholine(in) = acetylcholine(out). The enzyme catalyses prostaglandin F2alpha(out) = prostaglandin F2alpha(in). The catalysed reaction is prostaglandin E2(out) = prostaglandin E2(in). Tyrosine phosphorylation of the transporter leads to activation of the transport activity. Inhibited by cGMP, most likely through a cGMP-binding protein that interacts with OCT2. In terms of biological role, electrogenic voltage-dependent transporter that mediates the transport of a variety of organic cations such as endogenous bioactive amines, cationic drugs and xenobiotics. Functions as a Na(+)-independent, bidirectional uniporter. Cation cellular uptake or release is driven by the electrochemical potential, i.e. membrane potential and concentration gradient. However, may also engage electroneutral cation exchange when saturating concentrations of cation substrates are reached. Predominantly expressed at the basolateral membrane of hepatocytes and proximal tubules and involved in the uptake and disposition of cationic compounds by hepatic and renal clearance from the blood flow. Implicated in monoamine neurotransmitters uptake such as histamine, dopamine, adrenaline/epinephrine, noradrenaline/norepinephrine, serotonin and tyramine, thereby supporting a physiological role in the central nervous system by regulating interstitial concentrations of neurotransmitters. Also capable of transporting dopaminergic neuromodulators cyclo(his-pro), salsolinol and N-methyl-salsolinol, thereby involved in the maintenance of dopaminergic cell integrity in the central nervous system. Mediates the bidirectional transport of acetylcholine (ACh) at the apical membrane of ciliated cell in airway epithelium, thereby playing a role in luminal release of ACh from bronchial epithelium. Also transports guanidine and endogenous monoamines such as vitamin B1/thiamine, creatinine and N-1-methylnicotinamide (NMN). Mediates the uptake and efflux of quaternary ammonium compound choline. Mediates the bidirectional transport of polyamine agmatine and the uptake of polyamine putrescine. Able to transport non-amine endogenous compounds such as prostaglandin E2 (PGE2) and prostaglandin F2-alpha (PGF2-alpha). Also involved in the uptake of xenobiotic 4-(4-(dimethylamino)styryl)-N-methylpyridinium (ASP). May contribute to regulate the transport of organic compounds in testis across the blood-testis-barrier. This chain is Solute carrier family 22 member 2, found in Rattus norvegicus (Rat).